The following is a 188-amino-acid chain: Pro-adrenomedullin (188 aa).

The signal sequence occupies residues 1 to 21 (MKLVPVALLYLGSLAFLGVDT). At R41 the chain carries Arginine amide. The propeptide occupies 45-92 (ELRESSSYPTGLADVKAGPVQTLIRPQDVKGASRSPQASSPDAARIRV). The segment at 69–89 (RPQDVKGASRSPQASSPDAAR) is disordered. The cysteines at positions 110 and 115 are disulfide-linked. Positions 129–175 (DKDKDGSAPRSKISPQGYGRRRRRSLPEAGLGRTLLQPPEPKLRGAP) are disordered. A Tyrosine amide modification is found at Y146. Residues 153 to 188 (SLPEAGLGRTLLQPPEPKLRGAPDSRVHQVLATLRI) constitute a propeptide, preproAM C-terminal fragment.

It belongs to the adrenomedullin family.

It is found in the secreted. Its function is as follows. Adrenomedullin/ADM and proadrenomedullin N-20 terminal peptide/PAMP are peptide hormones that act as potent hypotensive and vasodilatator agents. Numerous actions have been reported most related to the physiologic control of fluid and electrolyte homeostasis. In terms of biological role, ADM function is mediated by the CALCRL-RAMP2 and CALCRL-RAMP3 receptor complexes with ADM showing the highest potency for the CALCRL-RAMP2 complex. The protein is Pro-adrenomedullin (ADM) of Bos taurus (Bovine).